The following is a 190-amino-acid chain: Peptidyl-tRNA hydrolase (190 aa).

A tRNA-binding site is contributed by Tyr18. The active-site Proton acceptor is the His23. Tyr69, Asn71, and Asn117 together coordinate tRNA.

Belongs to the PTH family. In terms of assembly, monomer.

The protein resides in the cytoplasm. The enzyme catalyses an N-acyl-L-alpha-aminoacyl-tRNA + H2O = an N-acyl-L-amino acid + a tRNA + H(+). Hydrolyzes ribosome-free peptidyl-tRNAs (with 1 or more amino acids incorporated), which drop off the ribosome during protein synthesis, or as a result of ribosome stalling. In terms of biological role, catalyzes the release of premature peptidyl moieties from peptidyl-tRNA molecules trapped in stalled 50S ribosomal subunits, and thus maintains levels of free tRNAs and 50S ribosomes. The chain is Peptidyl-tRNA hydrolase from Rhodococcus erythropolis (strain PR4 / NBRC 100887).